Consider the following 106-residue polypeptide: Toxin-like structure LSTX-D4 (106 aa).

A signal peptide spans 1-20 (MMKVLVVVALLVTLISYSSS). Positions 21 to 41 (EGIGDLEADELLSLMANEQTR) are excised as a propeptide. Intrachain disulfides connect Cys-45–Cys-60, Cys-52–Cys-69, Cys-59–Cys-85, and Cys-71–Cys-83.

This sequence belongs to the neurotoxin 19 (CSTX) family. 02 (D7) subfamily. In terms of tissue distribution, expressed by the venom gland.

The protein resides in the secreted. The chain is Toxin-like structure LSTX-D4 from Lycosa singoriensis (Wolf spider).